The chain runs to 246 residues: MTQSTRILLGVNIDHVATLRQARGTRYPDPVKAALDAEEAGADGITVHLREDRRHIQERDVLLLKDVLQTRMNFEMGVTEEMLAFAERIRPAHICLVPETRQELTTEGGLDVAGQEARIKAAVERLAKIGCEVSLFIDADERQIAASKRVGAPAVELHTGRYADAQTPTEVAEELQRVADGVAFGLAQGLIVNAGHGLHYHNVEAVAAIKGINELNIGHALVAHALFVGFKAAVAEMKALIVAAAR.

Asn12 lines the 3-amino-2-oxopropyl phosphate pocket. 1-deoxy-D-xylulose 5-phosphate is bound at residue Asp14–His15. Arg23 provides a ligand contact to 3-amino-2-oxopropyl phosphate. His48 acts as the Proton acceptor in catalysis. 1-deoxy-D-xylulose 5-phosphate-binding residues include Arg50 and His55. Residue Glu75 is the Proton acceptor of the active site. Thr105 is a binding site for 1-deoxy-D-xylulose 5-phosphate. His196 serves as the catalytic Proton donor. Residues Gly197 and Gly218 to His219 each bind 3-amino-2-oxopropyl phosphate.

Belongs to the PNP synthase family. Homooctamer; tetramer of dimers.

Its subcellular location is the cytoplasm. The enzyme catalyses 3-amino-2-oxopropyl phosphate + 1-deoxy-D-xylulose 5-phosphate = pyridoxine 5'-phosphate + phosphate + 2 H2O + H(+). It functions in the pathway cofactor biosynthesis; pyridoxine 5'-phosphate biosynthesis; pyridoxine 5'-phosphate from D-erythrose 4-phosphate: step 5/5. Its function is as follows. Catalyzes the complicated ring closure reaction between the two acyclic compounds 1-deoxy-D-xylulose-5-phosphate (DXP) and 3-amino-2-oxopropyl phosphate (1-amino-acetone-3-phosphate or AAP) to form pyridoxine 5'-phosphate (PNP) and inorganic phosphate. The sequence is that of Pyridoxine 5'-phosphate synthase from Pseudomonas syringae pv. tomato (strain ATCC BAA-871 / DC3000).